Consider the following 274-residue polypeptide: tRNA dimethylallyltransferase (274 aa).

The interaction with substrate tRNA stretch occupies residues 9–12 (DSLS).

The protein belongs to the IPP transferase family. In terms of assembly, monomer. It depends on Mg(2+) as a cofactor.

It carries out the reaction adenosine(37) in tRNA + dimethylallyl diphosphate = N(6)-dimethylallyladenosine(37) in tRNA + diphosphate. In terms of biological role, catalyzes the transfer of a dimethylallyl group onto the adenine at position 37 in tRNAs that read codons beginning with uridine, leading to the formation of N6-(dimethylallyl)adenosine (i(6)A). The chain is tRNA dimethylallyltransferase (miaA) from Helicobacter pylori (strain P12).